The primary structure comprises 1650 residues: MIDIIDYNFNNHIKNDNSKFNNILKKYQINNNTFENGAILDLNDIGSNILYKNEDKEKDEEEYYYYKENQNIYNKIGNDLNYNFQYNEYIENNDFENNQPIDNFNVEGSGGGKQIISYYLSKNGNDTTGNGTINSPYLSICKIVNIINSYNGINIFKVFIEIGNYEAVEGCTLNIINNSVVSLIYFTKNEIINNNNNNNFNNNNNNNNNNNNNKNNYNNNKSNLIIPNIINLNINLKNSTFFLNYINLHYFNEKVINITYGINTFQFLIENSNLHCVNPKLPYCNILFNKLNQSLIINDDNEAMILIKNSNIIKFDFYFNIIEMNVENSNLYFTSLYSLISQNLTFSKSYFNNTLIYLVEYQAINVSIDHCKMIYDFSNNIQVFLMGTGNILTISNSQMESTGEFFSSYITCKNAKVQLMNVQFINWYLLRPFINLSLNSTLIMENVFARKMYIPAFIEIGNSELIIDTLEISGNKLVLIIIEGPSVISISYLTLKYQSEQGSPIMMNFPGGGFGMKTIINITSSNFINIDGFTLKDAQLTLFNVSMHSDSINSLFALSSSQLFSSKSTFSSSLIVGSYFLFSLDFTSLVDLDRCILTNSSSLFQANSFSNITITNSLIDSVFSRSVAIEIQGGSSFTMINSIINKTYVVSQSFIYSSSNSDIIIHKCNFLQFVMGLKPLGNFLNSNVFIDHLLLYQSFFQNQIFVATSSIMYISDTKLFNNSIYGSEMFLLNNQSYLLMNNSLIYGNSISVCFSSSHSLANIHNVTFQNNSGIFLYSVDSKISLSLLEFSKNPISSLYYLFYFTNSSATFQQLTIDSNYFMGSVIEAHFSEILFTNLIFSLNQNVDNLLKDRESPSLVFTHSNVKIINSTINSNSQWSLDLIWSQKSILIIKNSLFNSNSIPYNGYLIRLETCHLSLDHCLIFGTQSIEGTIGSFNSIINATNNLFLQNNALEMGGCFFLSNSQILSFSNNSFLNNTASIGAAIFTNGTLINNTLIIKSNKFLNNNAYEYGDNIGSYPTWISVEYPEDFDSTINYIRLYDNYSNLVADNFYTANIIIYDSRVNENISLTTFIRGGSGDFNYSFNVFSIYDFQISINIIADGFNINYLKYKSPPKCLNFQTSTLSDGCIFCPINQAATPEKGECTKCDTNKLVCLNNDVHTLQDYFMINNDVSKVYQCPFGLCSGQNNCNSNLFLLSSLQSPLCSRCLNDYNNENDDENQFKYNNNENSGSSGNSNNNENSNSNSDSNSNSNSNSNSNSNSNSNSNSNSNSNSNSNSNENNYNGGDDDDDEKNINNYKPSKSKNGLYCCNKFQPLLLIPFIFWILFFGLFLSLFKNVITGTMIGQIILFLQLNSIVFYPLPNIYGLQLFRMSIDYFDRYCLFKLDYIEKISISLISIFLIYLIGISDVTSRLILSILKRSLKLKKLIPLVIEKQLRKFEYYKMNRINTRLKSNWNIYLMLIQPLFHCLISLIVPKSIGSTTYLSIDLTILFISTPIQIVFFFSSIVILFLLEFRWWDLIFVFKTILFTSLSVTLLYNPPVYFSALVICQIVYSYSQFAFSPQRKDHMYRVENLLNLFQLSILIVINTSIIRNLSFNLIGILFTIVIFSCSLITIIYKLFFYKKLKTIKNHRLLNLIINVDDNKKKTNKNK.

The stretch at 194–225 (NNNNNNFNNNNNNNNNNNNNKNNYNNNKSNLI) forms a coiled coil. Disordered stretches follow at residues 197–216 (NNNFNNNNNNNNNNNNNKNN) and 1218–1296 (ENQF…NINN). Low complexity predominate over residues 1224–1284 (NNNENSGSSG…SNSNENNYNG (61 aa)). The next 9 membrane-spanning stretches (helical) occupy residues 1314 to 1334 (PLLLIPFIFWILFFGLFLSLF), 1347 to 1369 (ILFLQLNSIVFYPLPNIYGLQLF), 1390 to 1410 (ISISLISIFLIYLIGISDVTS), 1454 to 1474 (WNIYLMLIQPLFHCLISLIVP), 1489 to 1509 (ILFISTPIQIVFFFSSIVILF), 1515 to 1535 (WWDLIFVFKTILFTSLSVTLL), 1539 to 1559 (PVYFSALVICQIVYSYSQFAF), 1570 to 1590 (VENLLNLFQLSILIVINTSII), and 1595 to 1615 (FNLIGILFTIVIFSCSLITII).

It localises to the membrane. The protein is Transmembrane domain-containing protein DDB_G0287209 of Dictyostelium discoideum (Social amoeba).